Reading from the N-terminus, the 808-residue chain is uncharacterized protein (808 aa).

Residue 35-42 coordinates ATP; it reads GPNNVGKT.

This is an uncharacterized protein from Methanocaldococcus jannaschii (strain ATCC 43067 / DSM 2661 / JAL-1 / JCM 10045 / NBRC 100440) (Methanococcus jannaschii).